The primary structure comprises 342 residues: Isopentenyl-diphosphate delta-isomerase (342 aa).

Residue 11–12 participates in substrate binding; it reads RK. FMN is bound by residues serine 68, 69–71, serine 99, and asparagine 127; that span reads SMT. 99–101 lines the substrate pocket; the sequence is SMR. Glutamine 162 is a substrate binding site. Glutamate 163 lines the Mg(2+) pocket. FMN is bound by residues lysine 194, threonine 224, 274-276, and 295-296; these read GLK and AG.

It belongs to the IPP isomerase type 2 family. As to quaternary structure, homooctamer. Dimer of tetramers. Requires FMN as cofactor. NADPH serves as cofactor. The cofactor is Mg(2+).

The protein localises to the cytoplasm. The catalysed reaction is isopentenyl diphosphate = dimethylallyl diphosphate. Involved in the biosynthesis of isoprenoids. Catalyzes the 1,3-allylic rearrangement of the homoallylic substrate isopentenyl (IPP) to its allylic isomer, dimethylallyl diphosphate (DMAPP). This Rickettsia peacockii (strain Rustic) protein is Isopentenyl-diphosphate delta-isomerase.